The primary structure comprises 280 residues: Vitamin B12-binding protein (280 aa).

The signal sequence occupies residues methionine 1 to alanine 27. Residues arginine 30–alanine 277 enclose the Fe/B12 periplasmic-binding domain. Residue tyrosine 57 coordinates cyanocob(III)alamin. Cysteine 190 and cysteine 266 are joined by a disulfide.

The protein belongs to the BtuF family. In terms of assembly, the complex is composed of two ATP-binding proteins (BtuD), two transmembrane proteins (BtuC) and a solute-binding protein (BtuF).

Its subcellular location is the periplasm. Functionally, part of the ABC transporter complex BtuCDF involved in vitamin B12 import. Binds vitamin B12 and delivers it to the periplasmic surface of BtuC. The polypeptide is Vitamin B12-binding protein (Yersinia pseudotuberculosis serotype O:3 (strain YPIII)).